The following is a 309-amino-acid chain: Taste receptor type 2 member 31 (309 aa).

At 1-2 (MT) the chain is on the extracellular side. The helical transmembrane segment at 3–23 (TFIPIIFSSVVVVLFVIGNFA) threads the bilayer. The Cytoplasmic portion of the chain corresponds to 24 to 55 (NGFIALVNSIERVKRQKISFADQILTALAVSR). Residues 56-76 (VGLLWVLLLNWYSTVFNPAFY) traverse the membrane as a helical segment. Topologically, residues 77-100 (SVEVRTTAYNVWAVTGHFSNWLAT) are extracellular. A helical membrane pass occupies residues 101–121 (SLSIFYLLKIANFSNLIFLHL). Residues 122–126 (KRRVK) lie on the Cytoplasmic side of the membrane. A helical transmembrane segment spans residues 127–147 (SVILVMLLGPLLFLACQLFVI). Over 148–181 (NMKEIVRTKEYEGNLTWKIKLRSAVYLSDATVTT) the chain is Extracellular. Residue asparagine 161 is glycosylated (N-linked (GlcNAc...) asparagine). The helical transmembrane segment at 182-202 (LGNLVPFTLTLLCFLLLICSL) threads the bilayer. Residues 203-229 (CKHLKKMQLHGKGSQDPSTKVHIKALQ) lie on the Cytoplasmic side of the membrane. A helical transmembrane segment spans residues 230-250 (TVIFFLLLCAVYFLSIMISVW). The Extracellular segment spans residues 251–259 (SFGSLENKP). Residues 260-280 (VFMFCKAIRFSYPSIHPFILI) traverse the membrane as a helical segment. Topologically, residues 281 to 309 (WGNKKLKQTFLSVLRQVRYWVKGEKPSSP) are cytoplasmic.

It belongs to the G-protein coupled receptor T2R family. As to expression, expressed in subsets of taste receptor cells of the tongue and exclusively in gustducin-positive cells.

It is found in the membrane. In terms of biological role, receptor that may play a role in the perception of bitterness and is gustducin-linked. May play a role in sensing the chemical composition of the gastrointestinal content. The activity of this receptor may stimulate alpha gustducin, mediate PLC-beta-2 activation and lead to the gating of TRPM5. Activated by the sulfonyl amide sweeteners saccharin and acesulfame K. The protein is Taste receptor type 2 member 31 (TAS2R31) of Homo sapiens (Human).